We begin with the raw amino-acid sequence, 106 residues long: UPF0145 protein SCO3412 (106 aa).

This sequence belongs to the UPF0145 family.

The sequence is that of UPF0145 protein SCO3412 from Streptomyces coelicolor (strain ATCC BAA-471 / A3(2) / M145).